The chain runs to 704 residues: MADSAKTPRGKKRRPFTGLALWIIVALLLGMAMFSLFGRDGYQQIDTQQGLELLAGDTVEQAKIIDGNQQRVDLVLTEDFKDGDEDKGTQVRFSYVDARGDAVVQAVEDAAPAKGYTDEIASSSWWSTLLLSFLPLLIFIGLFWFLIMNAQGGGKAMQFGKSKAKLFNKEAPKVTFADVAGADEAVEELDEIKQFLVDPGRYQAVGAKIPKGVLLYGPPGTGKTLLAKAVAGEANVPFYSISGSDFVEMFVGVGASRVRDLFNTAKENAPAIIFIDEIDAVGRHRGAGMGGGHDEREQTLNQMLVEMDGFEENQNVILIAATNRVDILDPALLRPGRFDRQIGVEAPDLKGRLHILGVHAKGKPLAHDVDLEAVAKRAIGMSGADLANVLNEAALLTARSGNQIIDNRALDEAIDRVSMGPQRYSKVMTERERQMTAYHEGGHALVAAAMNNSAPVTKVTILPRGRAGGYTMVVPTQDRNYQSRNELLDRLAYAMGGYAVEESIFHDVTTGPSSDLQNATKIARTMVMQLGMSGTVGQVALSGEQDEVFVGMQQGQAPRFSAETASLVDQEVRTLLDNALDEAWSVIVENRHVLDRLVEELLEKETLNERELAQIFRDVKKQPPREVWISSTERPSLAAPSVGGTTTATGTESHDAGEPLQPNPPELPHPGGEGPQIPGAPHGGEPGGGGYGYDGSAGTDGTGR.

Topologically, residues M1 to T17 are cytoplasmic. The helical transmembrane segment at G18–G38 threads the bilayer. Topologically, residues R39–S127 are extracellular. Residues T128–M148 traverse the membrane as a helical segment. Topologically, residues N149 to R704 are cytoplasmic. G217 to T224 lines the ATP pocket. Residue H439 coordinates Zn(2+). E440 is a catalytic residue. 2 residues coordinate Zn(2+): H443 and D515. The interval P624–R704 is disordered. Residues P681–R704 show a composition bias toward gly residues.

It in the central section; belongs to the AAA ATPase family. The protein in the C-terminal section; belongs to the peptidase M41 family. Homohexamer. It depends on Zn(2+) as a cofactor.

It is found in the cell membrane. Its function is as follows. Acts as a processive, ATP-dependent zinc metallopeptidase for both cytoplasmic and membrane proteins. Plays a role in the quality control of integral membrane proteins. In Brachybacterium faecium (strain ATCC 43885 / DSM 4810 / JCM 11609 / LMG 19847 / NBRC 14762 / NCIMB 9860 / 6-10), this protein is ATP-dependent zinc metalloprotease FtsH.